A 348-amino-acid chain; its full sequence is Dihydroorotase (348 aa).

Zn(2+) contacts are provided by H13 and H15. Residues 15 to 17 and N41 each bind substrate; that span reads HLR. Zn(2+) contacts are provided by K99, H136, and H174. K99 bears the N6-carboxylysine mark. H136 lines the substrate pocket. L219 is a binding site for substrate. D247 contacts Zn(2+). D247 is an active-site residue. Residues H251 and A263 each coordinate substrate.

This sequence belongs to the metallo-dependent hydrolases superfamily. DHOase family. Class II DHOase subfamily. In terms of assembly, homodimer. It depends on Zn(2+) as a cofactor.

It carries out the reaction (S)-dihydroorotate + H2O = N-carbamoyl-L-aspartate + H(+). Its pathway is pyrimidine metabolism; UMP biosynthesis via de novo pathway; (S)-dihydroorotate from bicarbonate: step 3/3. Catalyzes the reversible cyclization of carbamoyl aspartate to dihydroorotate. This Rhizobium johnstonii (strain DSM 114642 / LMG 32736 / 3841) (Rhizobium leguminosarum bv. viciae) protein is Dihydroorotase.